The following is a 172-amino-acid chain: Putative Dresden prostate carcinoma protein 2 (172 aa).

The tract at residues 40 to 61 (QCEEEEAMTPRPTKARAPLPSA) is disordered.

Very high expression in prostate and prostate cancer. Faint expression in other tissues.

The protein is Putative Dresden prostate carcinoma protein 2 (HMGN2P46) of Homo sapiens (Human).